The sequence spans 286 residues: MSTEITHHQAMINGYRMHYVTAGSGYPLVLLHGWPQSWYEWRNVIPALAEQFTVIAPDLRGLGDSEKPMTGFDKRTMATDVRELVSHLGYDKVGVIGHDWGGSVAFYFAYDNRDLVERLFILDMIPGLIKAGDSFPIPVALMINHIFFHGGNPDWATALISKDVNLYLRRFLTTLDYNYSPNVFSEEDIAEYVRVNSLPGSIRSGCQWYATGLREDTENLAKATDKLTIPVIAWGGSHFLGDIRPAWQEVAENVEGGAVENCGHFVPEEKPQFVIDTALKFFAPLR.

One can recognise an AB hydrolase-1 domain in the interval 26-123 (YPLVLLHGWP…DLVERLFILD (98 aa)). Asp-99 functions as the Nucleophile in the catalytic mechanism. The active-site Proton donor is the Tyr-209. His-264 acts as the Proton acceptor in catalysis.

This sequence belongs to the AB hydrolase superfamily. Epoxide hydrolase family. Homotetramer.

It is found in the cytoplasm. The protein localises to the cell membrane. The catalysed reaction is an epoxide + H2O = an ethanediol. Its function is as follows. Involved in catabolic degradation of epoxides. Shows highest activity towards C6 and C7 carbocyclic epoxides. Also active towards linear 1,2-epoxyalkanes. This Corynebacterium sp. (strain C12) protein is Soluble epoxide hydrolase.